A 220-amino-acid polypeptide reads, in one-letter code: Large ribosomal subunit protein bL9 (220 aa).

Residues 167–184 show a composition bias toward low complexity; the sequence is AAAEVEQAEDVAAAEQQD. The segment at 167-220 is disordered; it reads AAAEVEQAEDVAAAEQQDSSPVDDHADDADGVADGEGRDEGAGDASDEEEMPST. Residues 211-220 show a composition bias toward acidic residues; sequence ASDEEEMPST.

This sequence belongs to the bacterial ribosomal protein bL9 family.

Binds to the 23S rRNA. In Anaplasma marginale (strain Florida), this protein is Large ribosomal subunit protein bL9.